The chain runs to 346 residues: MTHRFLEACRKQPVDRLPVWMMRQAGRYQPSYRAVRANVGFLELCRSPELIAQVTVAPIDEFGFDAAILFSDILVHLPAMGLDLSFEKGEKGKGDGGPKIANPVRTRADVDALKVPAPKKDLPYVLDGVRAIRAALRDRVPLIGFVGGPFTVASYAVEGGSQGFTRLKTMLYAEPRTAHALFEKLTQAAIVQIEEQIAAGAQAAQIFESWLGELDRADLEEFAFPYLARIAEAVKRTGVPSIFFSTGTTAHLEPISKLGYDVVSVDWRIPIDEARRRAPGVAIQGNMDSTVLLGPKEVAVERALSIVRAAGREPGYIFNLGHGIQPGTPTETVKAVVDAVHAFAWK.

Residues 23-27 (RQAGR), Asp-72, Tyr-155, Ser-209, and His-322 each bind substrate.

It belongs to the uroporphyrinogen decarboxylase family. In terms of assembly, homodimer.

The protein resides in the cytoplasm. The enzyme catalyses uroporphyrinogen III + 4 H(+) = coproporphyrinogen III + 4 CO2. It participates in porphyrin-containing compound metabolism; protoporphyrin-IX biosynthesis; coproporphyrinogen-III from 5-aminolevulinate: step 4/4. In terms of biological role, catalyzes the decarboxylation of four acetate groups of uroporphyrinogen-III to yield coproporphyrinogen-III. This chain is Uroporphyrinogen decarboxylase, found in Anaeromyxobacter sp. (strain Fw109-5).